A 570-amino-acid chain; its full sequence is E3 ubiquitin-protein ligase ZFP91 (570 aa).

The segment covering 1 to 12 has biased composition (basic and acidic residues); the sequence is MPGETEEPRPPE. Residues 1-306 are disordered; sequence MPGETEEPRP…PRLPKRRKKP (306 aa). Composition is skewed to low complexity over residues 31–43 and 59–68; these read QRPP…APAG and AAAAAAAAAV. Residues 69 to 82 are compositionally biased toward basic residues; that stretch reads SRRRKAEYPRRRRS. Ser-83 and Ser-103 each carry phosphoserine. Positions 94 to 104 are enriched in polar residues; that stretch reads QQPQAAKSPSP. Residues 119 to 128 show a composition bias toward basic and acidic residues; it reads VTTDKDPKEE. Residues 207–223 show a composition bias toward acidic residues; sequence SEEEEEEEEEMLISEEE. Basic and acidic residues-rich tracts occupy residues 224 to 245 and 252 to 269; these read IPFK…ETPK and KVKE…VEVE. Residues 270 to 282 show a composition bias toward acidic residues; that stretch reads VKEEENEIREDEE. C2H2-type zinc fingers lie at residues 311–336, 342–366, 372–394, 400–422, and 430–453; these read VRCE…KYQH, YVCP…AKHH, YICE…RMIH, LQCE…MKKH, and FSCN…AKSH. An interaction with MAP3K14/NIK region spans residues 338–368; the sequence is LKKKYVCPHPSCGRLFRLQKQLLRHAKHHTD.

Belongs to the krueppel C2H2-type zinc-finger protein family. As to quaternary structure, interacts with MAP3K14/NIK. As to expression, expressed ubiquitously, particularly at high level in testis. Isoform 2 is testis specific.

It is found in the nucleus. It carries out the reaction S-ubiquitinyl-[E2 ubiquitin-conjugating enzyme]-L-cysteine + [acceptor protein]-L-lysine = [E2 ubiquitin-conjugating enzyme]-L-cysteine + N(6)-ubiquitinyl-[acceptor protein]-L-lysine.. The protein operates within protein modification; protein ubiquitination. Its function is as follows. Atypical E3 ubiquitin-protein ligase that mediates 'Lys-63'-linked ubiquitination of MAP3K14/NIK, leading to stabilize and activate MAP3K14/NIK. It thereby acts as an activator of the non-canonical NF-kappa-B2/NFKB2 pathway. May also play an important role in cell proliferation and/or anti-apoptosis. The sequence is that of E3 ubiquitin-protein ligase ZFP91 (ZFP91) from Homo sapiens (Human).